The chain runs to 171 residues: Adenine phosphoribosyltransferase (171 aa).

This sequence belongs to the purine/pyrimidine phosphoribosyltransferase family. Homodimer.

Its subcellular location is the cytoplasm. It catalyses the reaction AMP + diphosphate = 5-phospho-alpha-D-ribose 1-diphosphate + adenine. It functions in the pathway purine metabolism; AMP biosynthesis via salvage pathway; AMP from adenine: step 1/1. Its function is as follows. Catalyzes a salvage reaction resulting in the formation of AMP, that is energically less costly than de novo synthesis. The polypeptide is Adenine phosphoribosyltransferase (Geobacter metallireducens (strain ATCC 53774 / DSM 7210 / GS-15)).